A 275-amino-acid chain; its full sequence is Lectin DB58 (275 aa).

The signal sequence occupies residues Met1–Ser22. 2 N-linked (GlcNAc...) asparagine glycosylation sites follow: Asn34 and Asn101.

The protein belongs to the leguminous lectin family. In terms of assembly, heterodimer, composed of an alpha and a beta subunit derived from a single precursor. Post-translationally, leu-264 is missing in a major portion of the beta subunit, suggesting an origin by sequential removal of amino acids rather than a processing by endoproteolytic cleavage.

Metalloglycoprotein, containing Ca, Mg, Mn, and Zn and the carbohydrates galactose, glucosamine, mannose, and fucose. It agglutinates erythrocytes of blood group A1. The chain is Lectin DB58 from Vigna unguiculata subsp. cylindrica (Horse gram).